Reading from the N-terminus, the 345-residue chain is Beta-2-glycoprotein 1 (345 aa).

An N-terminal signal peptide occupies residues 1-19 (MISPVLILFSSFLCHVAIA). 4 Sushi domains span residues 21–81 (RTCP…KCTP), 82–139 (RVCP…VCAP), 140–202 (IICP…ECRE), and 203–262 (VKCP…SCKA). Disulfide bonds link cysteine 23–cysteine 66, cysteine 51–cysteine 79, cysteine 84–cysteine 124, cysteine 110–cysteine 137, cysteine 142–cysteine 188, cysteine 174–cysteine 200, cysteine 205–cysteine 248, cysteine 234–cysteine 260, cysteine 264–cysteine 315, cysteine 300–cysteine 325, and cysteine 307–cysteine 345. Residue threonine 33 is glycosylated (O-linked (GalNAc...) threonine). A glycan (O-linked (GalNAc...) threonine) is linked at threonine 149. An N-linked (GlcNAc...) (complex) asparagine glycan is attached at asparagine 162. Asparagine 183 and asparagine 193 each carry an N-linked (GlcNAc...) asparagine glycan. An N-linked (GlcNAc...) asparagine glycan is attached at asparagine 253. Residues 263 to 345 (SCKVPVKKAT…KTDASDVKPC (83 aa)) form a sushi-like region.

N- and O-glycosylated. PubMed:6587378 also reports glycosylation on 'Asn-188' for their allele. Expressed by the liver and secreted in plasma.

It is found in the secreted. Functionally, binds to various kinds of negatively charged substances such as heparin, phospholipids, and dextran sulfate. May prevent activation of the intrinsic blood coagulation cascade by binding to phospholipids on the surface of damaged cells. This Homo sapiens (Human) protein is Beta-2-glycoprotein 1 (APOH).